Consider the following 280-residue polypeptide: Probable endonuclease 4 (280 aa).

Residues histidine 69, histidine 109, glutamate 145, aspartate 179, histidine 182, histidine 216, aspartate 229, histidine 231, and glutamate 261 each contribute to the Zn(2+) site.

Belongs to the AP endonuclease 2 family. Zn(2+) is required as a cofactor.

It carries out the reaction Endonucleolytic cleavage to 5'-phosphooligonucleotide end-products.. Endonuclease IV plays a role in DNA repair. It cleaves phosphodiester bonds at apurinic or apyrimidinic (AP) sites, generating a 3'-hydroxyl group and a 5'-terminal sugar phosphate. The sequence is that of Probable endonuclease 4 from Erwinia tasmaniensis (strain DSM 17950 / CFBP 7177 / CIP 109463 / NCPPB 4357 / Et1/99).